We begin with the raw amino-acid sequence, 401 residues long: Carbamoyl phosphate synthase small chain (401 aa).

Residues 1 to 203 are CPSase; it reads MTETAPWTTR…KGYGTLGEAD (203 aa). The L-glutamine site is built by Ser56, Gly255, and Gly257. Residues 207 to 395 enclose the Glutamine amidotransferase type-1 domain; that stretch reads HVVCVDFGVK…VNLLRENKGE (189 aa). Residue Cys284 is the Nucleophile of the active site. Leu285, Gln288, Asn326, Gly328, and Phe329 together coordinate L-glutamine. Catalysis depends on residues His368 and Glu370.

The protein belongs to the CarA family. Composed of two chains; the small (or glutamine) chain promotes the hydrolysis of glutamine to ammonia, which is used by the large (or ammonia) chain to synthesize carbamoyl phosphate. Tetramer of heterodimers (alpha,beta)4.

It catalyses the reaction hydrogencarbonate + L-glutamine + 2 ATP + H2O = carbamoyl phosphate + L-glutamate + 2 ADP + phosphate + 2 H(+). The catalysed reaction is L-glutamine + H2O = L-glutamate + NH4(+). Its pathway is amino-acid biosynthesis; L-arginine biosynthesis; carbamoyl phosphate from bicarbonate: step 1/1. It functions in the pathway pyrimidine metabolism; UMP biosynthesis via de novo pathway; (S)-dihydroorotate from bicarbonate: step 1/3. Small subunit of the glutamine-dependent carbamoyl phosphate synthetase (CPSase). CPSase catalyzes the formation of carbamoyl phosphate from the ammonia moiety of glutamine, carbonate, and phosphate donated by ATP, constituting the first step of 2 biosynthetic pathways, one leading to arginine and/or urea and the other to pyrimidine nucleotides. The small subunit (glutamine amidotransferase) binds and cleaves glutamine to supply the large subunit with the substrate ammonia. In Agrobacterium fabrum (strain C58 / ATCC 33970) (Agrobacterium tumefaciens (strain C58)), this protein is Carbamoyl phosphate synthase small chain.